Consider the following 946-residue polypeptide: Probable outer membrane protein pmp18 (946 aa).

The N-terminal stretch at 1 to 16 (MQNNRSLSKSSFFVGA) is a signal peptide. One can recognise an Autotransporter domain in the interval 668 to 946 (QGQIAPTASG…YLHAGTTFKF (279 aa)).

This sequence belongs to the PMP outer membrane protein family.

The protein resides in the secreted. The protein localises to the cell wall. Its subcellular location is the cell outer membrane. The chain is Probable outer membrane protein pmp18 (pmp18) from Chlamydia pneumoniae (Chlamydophila pneumoniae).